The chain runs to 418 residues: Probable serine hydroxymethyltransferase (418 aa).

(6S)-5,6,7,8-tetrahydrofolate contacts are provided by residues Leu118 and 122–124 (GHL). N6-(pyridoxal phosphate)lysine is present on Lys226. 351 to 353 (SPF) contacts (6S)-5,6,7,8-tetrahydrofolate.

Belongs to the SHMT family. As to quaternary structure, homodimer. Requires pyridoxal 5'-phosphate as cofactor.

The protein localises to the cytoplasm. The enzyme catalyses (6R)-5,10-methylene-5,6,7,8-tetrahydrofolate + glycine + H2O = (6S)-5,6,7,8-tetrahydrofolate + L-serine. The protein operates within one-carbon metabolism; tetrahydrofolate interconversion. Its function is as follows. Catalyzes the reversible interconversion of serine and glycine with tetrahydrofolate (THF) serving as the one-carbon carrier. This reaction serves as the major source of one-carbon groups required for the biosynthesis of purines, thymidylate, methionine, and other important biomolecules. In Mesomycoplasma hyopneumoniae (strain 7448) (Mycoplasma hyopneumoniae), this protein is Probable serine hydroxymethyltransferase.